The chain runs to 400 residues: Glutamyl-tRNA reductase (400 aa).

Residues 45-48 (TCNR), Ser-103, 108-110 (EDQ), and Gln-114 each bind substrate. Cys-46 functions as the Nucleophile in the catalytic mechanism. Position 179 to 184 (179 to 184 (GYGEIG)) interacts with NADP(+).

The protein belongs to the glutamyl-tRNA reductase family. As to quaternary structure, homodimer.

The enzyme catalyses (S)-4-amino-5-oxopentanoate + tRNA(Glu) + NADP(+) = L-glutamyl-tRNA(Glu) + NADPH + H(+). It functions in the pathway porphyrin-containing compound metabolism; protoporphyrin-IX biosynthesis; 5-aminolevulinate from L-glutamyl-tRNA(Glu): step 1/2. Functionally, catalyzes the NADPH-dependent reduction of glutamyl-tRNA(Glu) to glutamate 1-semialdehyde (GSA). This is Glutamyl-tRNA reductase from Clostridium perfringens (strain ATCC 13124 / DSM 756 / JCM 1290 / NCIMB 6125 / NCTC 8237 / Type A).